The following is a 218-amino-acid chain: Small ribosomal subunit protein uS7 (218 aa).

This sequence belongs to the universal ribosomal protein uS7 family. In terms of assembly, part of the 30S ribosomal subunit.

Its function is as follows. One of the primary rRNA binding proteins, it binds directly to 16S rRNA where it nucleates assembly of the head domain of the 30S subunit. Is located at the subunit interface close to the decoding center. This is Small ribosomal subunit protein uS7 (rps7) from Pyrococcus horikoshii (strain ATCC 700860 / DSM 12428 / JCM 9974 / NBRC 100139 / OT-3).